Consider the following 185-residue polypeptide: Large ribosomal subunit protein uL5 (185 aa).

It belongs to the universal ribosomal protein uL5 family. In terms of assembly, part of the 50S ribosomal subunit; part of the 5S rRNA/L5/L18/L25 subcomplex. Contacts the 5S rRNA and the P site tRNA. Forms a bridge to the 30S subunit in the 70S ribosome.

Functionally, this is one of the proteins that bind and probably mediate the attachment of the 5S RNA into the large ribosomal subunit, where it forms part of the central protuberance. In the 70S ribosome it contacts protein S13 of the 30S subunit (bridge B1b), connecting the 2 subunits; this bridge is implicated in subunit movement. Contacts the P site tRNA; the 5S rRNA and some of its associated proteins might help stabilize positioning of ribosome-bound tRNAs. In Bradyrhizobium diazoefficiens (strain JCM 10833 / BCRC 13528 / IAM 13628 / NBRC 14792 / USDA 110), this protein is Large ribosomal subunit protein uL5.